The chain runs to 100 residues: MKKRLTEAQFQTAIKGLEIGQQTIDIARGVLVDGRPQAEFVTSLGLTKGAVSQAVSRVWAAAGEQLPEGFERVTAVLPEHQAFIVKKWEADAKRKQEPKS.

A DNA-binding region (H-T-H motif) is located at residues 37-56 (QAEFVTSLGLTKGAVSQAVS).

In terms of biological role, in conjunction with KorB, inhibits the transcription of kilA, trfA and korAB operons. In conjunction with KorC is responsible for the negative control of kilC and kilE operons. In Escherichia coli, this protein is TrfB transcriptional repressor protein (trfB).